The chain runs to 108 residues: Tubulin-specific chaperone A (108 aa).

Ala-2 is subject to N-acetylalanine.

This sequence belongs to the TBCA family. As to quaternary structure, supercomplex made of cofactors A to E. Cofactors A and D function by capturing and stabilizing tubulin in a quasi-native conformation. Cofactor E binds to the cofactor D-tubulin complex; interaction with cofactor C then causes the release of tubulin polypeptides that are committed to the native state. Widely expressed, but is most abundant in the testis.

The protein localises to the cytoplasm. It is found in the cytoskeleton. In terms of biological role, tubulin-folding protein; involved in the early step of the tubulin folding pathway. The chain is Tubulin-specific chaperone A (Tbca) from Mus musculus (Mouse).